A 337-amino-acid chain; its full sequence is Probable uridine nucleosidase 2 (337 aa).

Residue His-260 is part of the active site.

Belongs to the IUNH family.

The protein resides in the cytoplasm. The enzyme catalyses uridine + H2O = D-ribose + uracil. Functionally, involved in pyrimidine breakdown. This chain is Probable uridine nucleosidase 2 (URH2), found in Oryza sativa subsp. japonica (Rice).